Consider the following 435-residue polypeptide: MQIVVVGLSHRTAPVEVREKLSIPDQAISESLKSLRAYSDILEVSILSTCNRLEIYGLVKDKNIGISSIKEFLSDYSQVNCEVLTPHLFDFRQEEAVLHLMKVSAGLDSLVLGEGQILSQVKKMMRLGQENQSTGPILNRLLSQSVSAGKKVRAETNLGTGAVSISSAAVELAQLKIGQDNGIDGLVSLKGEKVLVVGAGRMSRLLITHLKSKGCNKLTLLNRNIDRAINLSGDFPDIEIICKGLDELDKSITLSSLVFTSTASEKPFIDLERIKNISLNNKLKFIDIGVPRNISNDVKQHDLIEAFDVDDLEEVVSRNQEFRQKIAKEAESLVKEERIIFLEWWASLEAVPVINKLRSDLELIRKEELQKALSRMGPDFSARERKVVEALTKGIINKILHTPVTKLRSPQSREERQASLKIVEKLFSLMDDEQK.

Residues threonine 49–arginine 52, serine 109, glutamate 114–glutamine 116, and glutamine 120 contribute to the substrate site. Cysteine 50 serves as the catalytic Nucleophile. Glycine 198–serine 203 lines the NADP(+) pocket.

It belongs to the glutamyl-tRNA reductase family. Homodimer.

It carries out the reaction (S)-4-amino-5-oxopentanoate + tRNA(Glu) + NADP(+) = L-glutamyl-tRNA(Glu) + NADPH + H(+). It participates in porphyrin-containing compound metabolism; protoporphyrin-IX biosynthesis; 5-aminolevulinate from L-glutamyl-tRNA(Glu): step 1/2. The protein operates within porphyrin-containing compound metabolism; chlorophyll biosynthesis. Catalyzes the NADPH-dependent reduction of glutamyl-tRNA(Glu) to glutamate 1-semialdehyde (GSA). The sequence is that of Glutamyl-tRNA reductase from Prochlorococcus marinus (strain MIT 9515).